The primary structure comprises 676 residues: DNA ligase (676 aa).

Residues 34–38 (DAEYD), 84–85 (SL), and Glu116 contribute to the NAD(+) site. Lys118 serves as the catalytic N6-AMP-lysine intermediate. NAD(+) contacts are provided by Arg139, Glu174, Lys294, and Lys318. Positions 412, 415, 428, and 433 each coordinate Zn(2+). The BRCT domain occupies 589–676 (KGGEALKGLT…RTGKKAEELV (88 aa)).

This sequence belongs to the NAD-dependent DNA ligase family. LigA subfamily. Mg(2+) serves as cofactor. It depends on Mn(2+) as a cofactor.

The catalysed reaction is NAD(+) + (deoxyribonucleotide)n-3'-hydroxyl + 5'-phospho-(deoxyribonucleotide)m = (deoxyribonucleotide)n+m + AMP + beta-nicotinamide D-nucleotide.. In terms of biological role, DNA ligase that catalyzes the formation of phosphodiester linkages between 5'-phosphoryl and 3'-hydroxyl groups in double-stranded DNA using NAD as a coenzyme and as the energy source for the reaction. It is essential for DNA replication and repair of damaged DNA. The chain is DNA ligase from Thermus thermophilus (strain ATCC 27634 / DSM 579 / HB8).